We begin with the raw amino-acid sequence, 360 residues long: GTPase Obg (360 aa).

The Obg domain occupies 1-156 (MFVDSVEIII…KCVRLELKLI (156 aa)). In terms of domain architecture, OBG-type G spans 157-360 (ADIGLVGFPN…LKFVLLEALP (204 aa)). Residues 163–170 (GFPNAGKS), 188–192 (FTTLV), 210–213 (DIPG), 279–282 (NKCD), and 341–343 (SAL) each bind GTP. Mg(2+) contacts are provided by Ser170 and Thr190.

This sequence belongs to the TRAFAC class OBG-HflX-like GTPase superfamily. OBG GTPase family. As to quaternary structure, monomer. It depends on Mg(2+) as a cofactor.

The protein resides in the cytoplasm. In terms of biological role, an essential GTPase which binds GTP, GDP and possibly (p)ppGpp with moderate affinity, with high nucleotide exchange rates and a fairly low GTP hydrolysis rate. Plays a role in control of the cell cycle, stress response, ribosome biogenesis and in those bacteria that undergo differentiation, in morphogenesis control. The sequence is that of GTPase Obg from Helicobacter pylori (strain Shi470).